A 556-amino-acid polypeptide reads, in one-letter code: Cytochrome P450 4g1 (556 aa).

Heme contacts are provided by E356 and C497.

It belongs to the cytochrome P450 family. It depends on heme as a cofactor.

Its subcellular location is the endoplasmic reticulum membrane. It is found in the microsome membrane. Its function is as follows. May be involved in the metabolism of insect hormones and in the breakdown of synthetic insecticides. The chain is Cytochrome P450 4g1 (Cyp4g1) from Drosophila melanogaster (Fruit fly).